Reading from the N-terminus, the 282-residue chain is MQEFQSIPGLAGRLFGGAAAADIRRAQAQQGPASRCGGIPSPEAVKCPRCESTNTKFCYYNNYNLSQPRHFCKSCRRYWTKGGVLRNVPVGGGCRKTKRSGSSSAASSAPSTPTAATDNAKNQRRASASSPRSSSGGSGNTSPTAAAATTPTTPATPSSNTIAVINHATTTTTTTNPFPTDVPPPAPIFADQAAALASLFAPPPPPPLPVFSFAAQAKTEDGIASVLLAGQTTAPTAATVADMTPFTSLDAGIFELGDVPPAAYWNAGSCWTDVPDPNVYLP.

The Dof-type zinc-finger motif lies at 45–99; that stretch reads VKCPRCESTNTKFCYYNNYNLSQPRHFCKSCRRYWTKGGVLRNVPVGGGCRKTKR. Cys-47, Cys-50, Cys-72, and Cys-75 together coordinate Zn(2+). The interval 89 to 161 is disordered; it reads PVGGGCRKTK…TTPATPSSNT (73 aa). Composition is skewed to low complexity over residues 102-117 and 125-161; these read SSSA…TAAT and RASA…SSNT.

It localises to the nucleus. In terms of biological role, transcription factor that may transactivate seed storage protein genes in developing seeds. The sequence is that of Dof zinc finger protein 4 from Oryza sativa subsp. japonica (Rice).